The chain runs to 439 residues: Glutamyl-tRNA(Gln) amidotransferase subunit D (439 aa).

An Asparaginase/glutaminase domain is found at 88-419 (GKVKIISTGG…EEVKRIMLTN (332 aa)). Residues T98, T174, D175, and K253 contribute to the active site.

It belongs to the asparaginase 1 family. GatD subfamily. As to quaternary structure, heterodimer of GatD and GatE.

The catalysed reaction is L-glutamyl-tRNA(Gln) + L-glutamine + ATP + H2O = L-glutaminyl-tRNA(Gln) + L-glutamate + ADP + phosphate + H(+). Its function is as follows. Allows the formation of correctly charged Gln-tRNA(Gln) through the transamidation of misacylated Glu-tRNA(Gln) in organisms which lack glutaminyl-tRNA synthetase. The reaction takes place in the presence of glutamine and ATP through an activated gamma-phospho-Glu-tRNA(Gln). The GatDE system is specific for glutamate and does not act on aspartate. This Metallosphaera sedula (strain ATCC 51363 / DSM 5348 / JCM 9185 / NBRC 15509 / TH2) protein is Glutamyl-tRNA(Gln) amidotransferase subunit D.